Reading from the N-terminus, the 853-residue chain is Stachyose synthase (853 aa).

The propeptide occupies 1 to 11; it reads MAPPLNSTTSN.

This sequence belongs to the glycosyl hydrolases 36 family.

The protein localises to the cytoplasm. The catalysed reaction is alpha-D-galactosyl-(1-&gt;3)-1D-myo-inositol + raffinose = stachyose + myo-inositol. It functions in the pathway glycan metabolism; stachyose biosynthesis; stachyose from raffinose: step 1/1. Its function is as follows. Catalyzes stachyose synthesis by transfer of a galactosyl moiety from galactinol to raffinose. Also catalyzes verbascose synthesis by galactosyl transfer from galactinol to stachyose or from one stachyose molecule to another. Oligosaccharides of the raffinose family play a protective role in maturation drying of seeds. They may act as cryoprotectants in frost-hardy plants. This Pisum sativum (Garden pea) protein is Stachyose synthase (STS1).